The chain runs to 171 residues: MSPKNLTPFLTALWLLLDHSRVPRVRAEECCEFINVNHPPERCYDFKMCNRFTVALRCPDGEVCYSPEKTAEIRGIVTTMTHSLTRQVVHNKLTSCNYNPLYLEADGRIRCGKVNDKAQYLLGAAGSVPYRWINLEYDKITRIVGLNQYLESVKKHKRLDVCRAKMGYMLQ.

It belongs to the HHV-5 UL128 protein family. Forms the envelope pentamer complex (PC) composed of gH, gL, UL128, UL130, and UL131A. The pentamer interacts with host NRP2.

It localises to the virion membrane. In terms of biological role, plays a role in viral entry into host cells. Forms a pentameric complex at the surface of the viral envelope together with gH, gL, UL130 and UL131. This complex is required for entry in epithelial, endothelial and myeloid host cells. Mechanistically, engages host receptor(s) including neurophilin 2/NRP2 to mediate infection. Additionally, monomeric UL128 may interfere with certain inflammatory cytokines to increase infection and dissemination by blocking monocytes migration. The protein is Envelope protein UL128 (UL128) of Human cytomegalovirus (strain Merlin) (HHV-5).